Here is a 160-residue protein sequence, read N- to C-terminus: 6,7-dimethyl-8-ribityllumazine synthase (160 aa).

5-amino-6-(D-ribitylamino)uracil is bound by residues Phe-32, 66-68, and 90-92; these read ALE and CII. (2S)-2-hydroxy-3-oxobutyl phosphate is bound at residue 95–96; it reads ET. His-98 acts as the Proton donor in catalysis. Asn-123 contacts 5-amino-6-(D-ribitylamino)uracil. Arg-137 contacts (2S)-2-hydroxy-3-oxobutyl phosphate.

It belongs to the DMRL synthase family.

It carries out the reaction (2S)-2-hydroxy-3-oxobutyl phosphate + 5-amino-6-(D-ribitylamino)uracil = 6,7-dimethyl-8-(1-D-ribityl)lumazine + phosphate + 2 H2O + H(+). It functions in the pathway cofactor biosynthesis; riboflavin biosynthesis; riboflavin from 2-hydroxy-3-oxobutyl phosphate and 5-amino-6-(D-ribitylamino)uracil: step 1/2. Functionally, catalyzes the formation of 6,7-dimethyl-8-ribityllumazine by condensation of 5-amino-6-(D-ribitylamino)uracil with 3,4-dihydroxy-2-butanone 4-phosphate. This is the penultimate step in the biosynthesis of riboflavin. In Methylibium petroleiphilum (strain ATCC BAA-1232 / LMG 22953 / PM1), this protein is 6,7-dimethyl-8-ribityllumazine synthase.